Reading from the N-terminus, the 292-residue chain is Peroxidase 2 (292 aa).

4 disulfide bridges follow: Cys-7–Cys-86, Cys-40–Cys-45, Cys-92–Cys-288, and Cys-171–Cys-199. The active-site Proton acceptor is His-38. Asp-39, Val-42, Gly-44, Asp-46, and Ser-48 together coordinate Ca(2+). The N-linked (GlcNAc...) asparagine glycan is linked to Asn-68. Pro-134 is a substrate binding site. N-linked (GlcNAc...) asparagine glycosylation is present at Asn-139. His-164 lines the heme b pocket. Thr-165 serves as a coordination point for Ca(2+). The N-linked (GlcNAc...) asparagine glycan is linked to Asn-179. Positions 210, 213, and 218 each coordinate Ca(2+).

Belongs to the peroxidase family. Classical plant (class III) peroxidase subfamily. It depends on Ca(2+) as a cofactor. Requires heme b as cofactor.

The enzyme catalyses 2 a phenolic donor + H2O2 = 2 a phenolic radical donor + 2 H2O. Its function is as follows. Removal of H(2)O(2), oxidation of toxic reductants, biosynthesis and degradation of lignin, suberization, auxin catabolism, response to environmental stresses such as wounding, pathogen attack and oxidative stress. These functions might be dependent on each isozyme/isoform in each plant tissue. This chain is Peroxidase 2, found in Cucumis sativus (Cucumber).